Consider the following 372-residue polypeptide: Cytochrome b (372 aa).

4 helical membrane-spanning segments follow: residues Phe-25–Ile-45, Trp-69–Ile-90, Trp-105–Leu-125, and Phe-170–Ile-190. 2 residues coordinate heme b: His-75 and His-89. Residues His-174 and His-188 each coordinate heme b. His-193 contributes to the a ubiquinone binding site. Transmembrane regions (helical) follow at residues Tyr-218–Ser-238, Leu-280–His-300, Leu-312–Ser-332, and Phe-339–Pro-358.

Belongs to the cytochrome b family. In terms of assembly, the cytochrome bc1 complex contains 3 respiratory subunits (MT-CYB, CYC1 and UQCRFS1), 2 core proteins (UQCRC1 and UQCRC2) and probably 6 low-molecular weight proteins. Heme b is required as a cofactor.

The protein resides in the mitochondrion inner membrane. In terms of biological role, component of the ubiquinol-cytochrome c reductase complex (complex III or cytochrome b-c1 complex) that is part of the mitochondrial respiratory chain. The b-c1 complex mediates electron transfer from ubiquinol to cytochrome c. Contributes to the generation of a proton gradient across the mitochondrial membrane that is then used for ATP synthesis. The sequence is that of Cytochrome b (MT-CYB) from Naja kaouthia (Monocled cobra).